Consider the following 185-residue polypeptide: Elongation factor P (185 aa).

This sequence belongs to the elongation factor P family.

The protein resides in the cytoplasm. Its pathway is protein biosynthesis; polypeptide chain elongation. Functionally, involved in peptide bond synthesis. Stimulates efficient translation and peptide-bond synthesis on native or reconstituted 70S ribosomes in vitro. Probably functions indirectly by altering the affinity of the ribosome for aminoacyl-tRNA, thus increasing their reactivity as acceptors for peptidyl transferase. The chain is Elongation factor P from Anoxybacillus flavithermus (strain DSM 21510 / WK1).